A 467-amino-acid polypeptide reads, in one-letter code: Argininosuccinate lyase (467 aa).

The protein belongs to the lyase 1 family. Argininosuccinate lyase subfamily.

Its subcellular location is the cytoplasm. The enzyme catalyses 2-(N(omega)-L-arginino)succinate = fumarate + L-arginine. Its pathway is amino-acid biosynthesis; L-arginine biosynthesis; L-arginine from L-ornithine and carbamoyl phosphate: step 3/3. This Thioalkalivibrio sulfidiphilus (strain HL-EbGR7) protein is Argininosuccinate lyase.